The primary structure comprises 105 residues: Protein LBH (105 aa).

One can recognise an LBH domain in the interval 18 to 104; the sequence is MTEVMMNTQP…CEETAKENKE (87 aa). Ser63 is modified (phosphoserine). Residues 86–96 show a composition bias toward acidic residues; it reads LVQEDEQDNCE. Residues 86–105 are disordered; that stretch reads LVQEDEQDNCEETAKENKEQ.

It belongs to the LBH family. Highly expressed in heart, and expressed at low levels in placenta, lung, skeletal muscle, kidney and liver.

It localises to the nucleus. The protein localises to the cytoplasm. Transcriptional activator which may act in mitogen-activated protein kinase signaling pathway. This is Protein LBH from Homo sapiens (Human).